The sequence spans 119 residues: Large ribosomal subunit protein bL20c (119 aa).

Belongs to the bacterial ribosomal protein bL20 family.

It localises to the plastid. It is found in the chloroplast. In terms of biological role, binds directly to 23S ribosomal RNA and is necessary for the in vitro assembly process of the 50S ribosomal subunit. It is not involved in the protein synthesizing functions of that subunit. This is Large ribosomal subunit protein bL20c from Saccharum officinarum (Sugarcane).